Here is a 260-residue protein sequence, read N- to C-terminus: Oxidoreductase macE (260 aa).

It belongs to the oxidoreductase OpS7 family.

It participates in secondary metabolite biosynthesis; terpenoid biosynthesis. In terms of biological role, oxidoreductase; part of the gene cluster that mediates the biosynthesis of macrophorins, isoprenoid epoxycyclohexenones containing cyclized drimane moieties. The first step of the pathway is the synthesis of 6-methylsalicylic acid (6-MSA) by the polyketide synthase macA. 6-MSA is then converted to m-cresol by the decarboxylase macB. The cytochrome P450 monooxygenase macC then catalyzes the oxidation of m-cresol to toluquinol. Epoxidation of toluquinol is then performed by the short chain dehydrogenase macD, with the help of macE, and a further prenylation by macG leads to 7-deacetoxyyanuthone A. The next step is the hydroxylation of C-22 of 7-deacetoxyyanuthone A by the cytochrome P450 monooxygenase macH to yield 22-deacetylyanuthone A. O-Mevalon transferase macI then attaches mevalon to the hydroxyl group of 22-deacetylyanuthone A to produce yanuthone E. The terpene cyclase macJ catalyzes the cyclization of 22-deacetylyanuthone A to macrophorin A. MacJ is also able to catalyze cyclization of yanuthone E and 7-deacetoxyyanuthone A to their corresponding macrophorins. The macJ products can be further modified by macH and macJ, as well as by the FAD-dependent monooxygenase macF, to produce additional macrophorins, including 4'-oxomacrophorin A, 4'-oxomacrophorin D and 4'-oxomacrophorin E. The polypeptide is Oxidoreductase macE (Penicillium terrestre).